The following is a 468-amino-acid chain: MGSKTFEGEGQRGGNDPSNSTSPNSAGGEPRGAHLSRDGDGSLGDGDGDDGADGDEKDGAVTTTPLTEQQPSSETTSKKKKRRKPKKKISALKQSSPPRVPLDDLFPTGQFPVGETHEYGSVVEGTARTTSEEVRYLSRNYLQDDSVLTDYRKAAEIHRQVRHWTQENVRPGQTLTEIAVGIEDGVRALLDNAGLETGQCLQSGMGFPTGLALNDCVAHYTPNPGQKDIVLQASDVMKVDFGVHINGWIVDSAFTMSFDPTYDNLLAAVKDATNTGIKNAGIDVRISDVSAAIQEAMESYEVEIGGKVFPVKPVRDISGHNINRYQIHGGKSIPFVKNSSQTKMEEGEIFAIETFGSTGRGSTVEGFGVYGYGKDPNAPKKVSSPLASARSLYKTINENFGSIVFCRRYLERLGVERYLAGMNSLVNNGIVEQYAPLMDMKGSYSAQFEHTILLRESCKEVVSRGNDY.

Positions 1–10 (MGSKTFEGEG) are enriched in basic and acidic residues. The disordered stretch occupies residues 1–106 (MGSKTFEGEG…PPRVPLDDLF (106 aa)). Polar residues predominate over residues 16-25 (DPSNSTSPNS). Basic and acidic residues predominate over residues 31–40 (RGAHLSRDGD). Positions 46-56 (GDGDDGADGDE) are enriched in acidic residues. The span at 61–75 (VTTTPLTEQQPSSET) shows a compositional bias: polar residues. Residues 78–90 (KKKKRRKPKKKIS) are compositionally biased toward basic residues. His219 provides a ligand contact to substrate. The a divalent metal cation site is built by Asp240, Asp251, and His320. A substrate-binding site is contributed by His328. Residues Glu353 and Glu449 each coordinate a divalent metal cation.

This sequence belongs to the peptidase M24A family. Methionine aminopeptidase eukaryotic type 2 subfamily. Co(2+) serves as cofactor. Requires Zn(2+) as cofactor. The cofactor is Mn(2+). Fe(2+) is required as a cofactor.

It localises to the cytoplasm. It catalyses the reaction Release of N-terminal amino acids, preferentially methionine, from peptides and arylamides.. Its function is as follows. Cotranslationally removes the N-terminal methionine from nascent proteins. The N-terminal methionine is often cleaved when the second residue in the primary sequence is small and uncharged (Met-Ala-, Cys, Gly, Pro, Ser, Thr, or Val). The chain is Methionine aminopeptidase 2 from Aspergillus oryzae (strain ATCC 42149 / RIB 40) (Yellow koji mold).